A 724-amino-acid chain; its full sequence is RNA-directed RNA polymerase (724 aa).

The RdRp catalytic domain maps to 424–540 (PVAVGLDASR…VCEKADLKKL (117 aa)).

It belongs to the tombusviridae RNA polymerase family.

The enzyme catalyses RNA(n) + a ribonucleoside 5'-triphosphate = RNA(n+1) + diphosphate. RNA-dependent RNA polymerase that plays an essential role in the virus replication. The polypeptide is RNA-directed RNA polymerase (Tobacco necrosis virus (strain A) (TNV-A)).